The following is a 97-amino-acid chain: Venom peptide HsVx1 (97 aa).

Residues 1 to 20 (MSHLRIAVTFLCTLFALTAG) form the signal peptide.

The protein belongs to the scorpion La1-like peptide family. Post-translationally, contains 4 disulfide bonds. In terms of tissue distribution, expressed by the venom gland.

It is found in the secreted. The polypeptide is Venom peptide HsVx1 (Heterometrus spinifer (Asia giant forest scorpion)).